Consider the following 425-residue polypeptide: SWI/SNF and RSC complexes subunit ssr3 (425 aa).

Over residues 1–16 (MSNNSRLPENGVQSGN) the composition is skewed to polar residues. Positions 1–23 (MSNNSRLPENGVQSGNGEDAELK) are disordered. One can recognise an SWIB/MDM2 domain in the interval 201–278 (EHPERYKLSK…PELMNRFLEP (78 aa)).

It belongs to the SMARCD family. As to quaternary structure, component of the RSC complex composed of at least arp9, arp42, rsc1, rsc4, rsc7, rsc9, rsc58, sfh1, snf21, ssr1, ssr2, ssr3 and ssr4. The complex interacts with histone and histone variant components of centromeric chromatin. Component of the SWI/SNF global transcription activator complex composed of at least arp9, arp42, snf5, snf22, snf30, sbf59, sol1, ssr1, ssr2, ssr3, ssr4 and tfg3.

The protein resides in the cytoplasm. It localises to the nucleus. Component of the chromatin structure remodeling complex (RSC), which is involved in transcription regulation and nucleosome positioning. Controls particularly membrane and organelle development genes. Part of the SWI/SNF complex, an ATP-dependent chromatin remodeling complex, required for the positive and negative regulation of gene expression of a large number of genes. It changes chromatin structure by altering DNA-histone contacts within a nucleosome, leading eventually to a change in nucleosome position, thus facilitating or repressing binding of gene-specific transcription factors. The protein is SWI/SNF and RSC complexes subunit ssr3 (ssr3) of Schizosaccharomyces pombe (strain 972 / ATCC 24843) (Fission yeast).